We begin with the raw amino-acid sequence, 687 residues long: Probable WRKY transcription factor 2 (687 aa).

The segment at 197–276 (YGNYNNRSSS…AGGAPAEDGY (80 aa)) is disordered. 2 stretches are compositionally biased toward polar residues: residues 199-208 (NYNNRSSSHQ) and 219-249 (NIES…TSLE). A DNA-binding region (WRKY 1) is located at residues 267–331 (AGGAPAEDGY…YKGAHNHLKP (65 aa)). The Zn(2+) site is built by Cys298, Cys303, His326, and His328. Disordered regions lie at residues 324–384 (GAHN…STRF) and 416–453 (FSND…ESKR). Residues 354–379 (RDSAATWVSCNNTQQQGGSNENNVEE) show a composition bias toward polar residues. Over residues 435–444 (YDGGGGGGGG) the composition is skewed to gly residues. Positions 481–546 (SDVDILDDGY…YEGKHNHDVP (66 aa)) form a DNA-binding region, WRKY 2. Zn(2+) contacts are provided by Cys512, Cys517, His541, and His543. Residues 537–599 (YEGKHNHDVP…QVTTNNQSPF (63 aa)) form a disordered region. Positions 553–565 (HGGGGDSGNGNSG) are enriched in gly residues. The span at 578 to 589 (HHSEPPRGRFDR) shows a compositional bias: basic and acidic residues. Residues 590–599 (QVTTNNQSPF) are compositionally biased toward polar residues.

This sequence belongs to the WRKY group I family. Low expression in senescent leaves. Expressed in both the unfertilized egg cell and the pollen tube.

It is found in the nucleus. Functionally, transcription factor. Regulates WOX8 and WOX9 expression and basal cell division patterns during early embryogenesis. Interacts specifically with the W box (5'-(T)TGAC[CT]-3'), a frequently occurring elicitor-responsive cis-acting element. Required to repolarize the zygote from a transient symmetric state. The chain is Probable WRKY transcription factor 2 from Arabidopsis thaliana (Mouse-ear cress).